The chain runs to 747 residues: Putative T-box protein 31 (747 aa).

A DNA-binding region (T-box) is located at residues 33-199 (QMLTKRKKTN…AGPAAKKTPD (167 aa)). Disordered regions lie at residues 268 to 289 (SLSS…DFDD) and 332 to 364 (SINN…VRDK). Polar residues predominate over residues 332 to 358 (SINNPGYLSTASSPAALNQDSSASEKS).

The protein localises to the nucleus. The chain is Putative T-box protein 31 (tbx-31) from Caenorhabditis elegans.